Here is a 296-residue protein sequence, read N- to C-terminus: 4-hydroxy-tetrahydrodipicolinate synthase (296 aa).

Thr-45 contributes to the pyruvate binding site. Tyr-133 functions as the Proton donor/acceptor in the catalytic mechanism. Lys-161 serves as the catalytic Schiff-base intermediate with substrate. Residue Ile-203 participates in pyruvate binding.

The protein belongs to the DapA family. Homotetramer; dimer of dimers.

It is found in the cytoplasm. It carries out the reaction L-aspartate 4-semialdehyde + pyruvate = (2S,4S)-4-hydroxy-2,3,4,5-tetrahydrodipicolinate + H2O + H(+). It functions in the pathway amino-acid biosynthesis; L-lysine biosynthesis via DAP pathway; (S)-tetrahydrodipicolinate from L-aspartate: step 3/4. Its function is as follows. Catalyzes the condensation of (S)-aspartate-beta-semialdehyde [(S)-ASA] and pyruvate to 4-hydroxy-tetrahydrodipicolinate (HTPA). The chain is 4-hydroxy-tetrahydrodipicolinate synthase from Idiomarina loihiensis (strain ATCC BAA-735 / DSM 15497 / L2-TR).